A 1219-amino-acid polypeptide reads, in one-letter code: Pleckstrin homology domain-containing family G member 3 (1219 aa).

Positions 1-10 (MPVSTSLHQD) are enriched in polar residues. Positions 1 to 66 (MPVSTSLHQD…HLPNSNNNSS (66 aa)) are disordered. Residues 18-46 (SLTSTTSSSGSSCDSRSAMEEPSSSEAPA) are compositionally biased toward low complexity. Position 76 is a phosphoserine (Ser-76). The region spanning 93–272 (YLGRVVREIV…TCVAWYINDM (180 aa)) is the DH domain. One can recognise a PH domain in the interval 296-394 (DLTTYGELVL…WTHHIKRLIL (99 aa)). Residues 431 to 442 (WSSQDEVSTNVR) show a composition bias toward polar residues. Disordered stretches follow at residues 431–599 (WSSQ…PSVL) and 613–708 (FSRR…KESA). Residue Ser-433 is modified to Phosphoserine. Positions 446 to 463 (RQSEPTKHLLRQLNEKAR) are enriched in basic and acidic residues. Residues Ser-576, Ser-577, Ser-618, Ser-631, Ser-640, Ser-643, and Ser-647 each carry the phosphoserine modification. Positions 630–645 (GSPRLVSRSSSVLSLE) are enriched in low complexity. Basic and acidic residues predominate over residues 696-708 (EPDRSSCKKKESA). Residues Ser-741, Ser-779, and Ser-827 each carry the phosphoserine modification. Disordered regions lie at residues 756-780 (RFNS…VGSR), 821-840 (MESS…ANGF), 859-878 (EESA…RSPA), 955-1133 (APER…LYVT), and 1146-1207 (VMEK…RVRN). The segment covering 826-836 (GSPGKGPGQGQ) has biased composition (gly residues). A compositionally biased stretch (low complexity) spans 859–873 (EESATASPESSSPTE). 5 positions are modified to phosphoserine: Ser-962, Ser-1011, Ser-1023, Ser-1037, and Ser-1040. A compositionally biased stretch (polar residues) spans 1020–1029 (SAVSQRTTSP). Basic and acidic residues predominate over residues 1049-1065 (DVRELCSKYASRDEARR). Ser-1081 is modified (phosphoserine). Position 1107 is an omega-N-methylarginine (Arg-1107). Residues 1187–1197 (QPKEEGSRDPA) are compositionally biased toward basic and acidic residues.

It localises to the cytoplasm. It is found in the cytoskeleton. Plays a role in controlling cell polarity and cell motility by selectively binding newly polymerized actin and activating RAC1 and CDC42 to enhance local actin polymerization. The protein is Pleckstrin homology domain-containing family G member 3 of Homo sapiens (Human).